A 378-amino-acid polypeptide reads, in one-letter code: MNAPTTFADSVTVPVSLGDRSYDILIGKGLVERAGEEVAKRLKGVRVAIVTDENVAAVHLERLQASFARAGIDSTPVIVAPGEKSKSFATLETVTNAILVAKLERGDAVVALGGGVVGDLSGFVAGIVRRGMNFVQMPTSLLAQVDSSVGGKTGINTAHGKNLVGVFNQPQLVLADTQVLDTLSPREFRAGYAEVAKYGLIDRPDFFAWLEANWQEVFSGGAARTKAIAESCRSKAAVVARDERETGDRALLNLGHTFGHALESATGYDSSRLVHGEGVAIGMALAYRFSARMNLAGIEAAERVEAHLKAVGLPVSLAEVPGGLPPAEKLMDYIAQDKKVTRGTLTFILTHGIGQSFIAKDVPPAAVLEFLKERLAIA.

Residues 115 to 119 (GVVGD), 139 to 140 (TS), Lys-152, and Lys-161 each bind NAD(+). 3 residues coordinate Zn(2+): Glu-194, His-256, and His-275.

It belongs to the sugar phosphate cyclases superfamily. Dehydroquinate synthase family. Requires Co(2+) as cofactor. The cofactor is Zn(2+). NAD(+) serves as cofactor.

Its subcellular location is the cytoplasm. It catalyses the reaction 7-phospho-2-dehydro-3-deoxy-D-arabino-heptonate = 3-dehydroquinate + phosphate. Its pathway is metabolic intermediate biosynthesis; chorismate biosynthesis; chorismate from D-erythrose 4-phosphate and phosphoenolpyruvate: step 2/7. Its function is as follows. Catalyzes the conversion of 3-deoxy-D-arabino-heptulosonate 7-phosphate (DAHP) to dehydroquinate (DHQ). The protein is 3-dehydroquinate synthase of Brucella abortus biovar 1 (strain 9-941).